A 397-amino-acid chain; its full sequence is N(6)-adenosine-methyltransferase non-catalytic subunit METTL14 (397 aa).

2 disordered regions span residues asparagine 37 to proline 67 and glutamate 368 to arginine 397. Polar residues predominate over residues aspartate 40 to glycine 51. A compositionally biased stretch (basic residues) spans leucine 382–arginine 397.

This sequence belongs to the MT-A70-like family. As to quaternary structure, component of the WMM complex, a N6-methyltransferase complex composed of a catalytic subcomplex, named MAC, and of an associated subcomplex, named MACOM. The MAC subcomplex is composed of Ime4/Mettl3 and Mettl14. The MACOM subcomplex is composed of fl(2)d, Flacc/Xio, Hakai, vir, and, in some cases of nito.

It is found in the nucleus. In terms of biological role, non-catalytic component of the WMM complex, a complex that mediates N6-methyladenosine (m6A) methylation of mRNAs, a modification that plays a role in the efficiency of mRNA splicing and is required for sex determination. In the heterodimer formed with Ime4/Mettl3, Mettl14 constitutes the RNA-binding scaffold that recognizes the substrate rather than the catalytic core. Required for sex determination and dosage compensation via Sxl alternative splicing: m6A methylation acts as a key regulator of Sxl pre-mRNA and promotes female-specific alternative splicing of Sxl, which determines female physiognomy. M6A methylation is also required for neuronal functions. The sequence is that of N(6)-adenosine-methyltransferase non-catalytic subunit METTL14 from Drosophila melanogaster (Fruit fly).